A 1480-amino-acid chain; its full sequence is Nonribosomal peptide synthetase-like enzyme fsqF (1480 aa).

Residues 31-59 are disordered; the sequence is SPFADEPSIDVPSTHLPVVTPRSKTANDR. The adenylation domain stretch occupies residues 132 to 527; that stretch reads DSARATPHAP…VGRTDDQVKY (396 aa). Positions 662 to 741 constitute a Carrier domain; it reads STARTIAREY…SIASLIDANS (80 aa). Ser700 bears the O-(pantetheine 4'-phosphoryl)serine mark. The segment covering 739 to 754 has biased composition (polar residues); the sequence is ANSSPGRGQPLNTQET. The segment at 739–773 is disordered; it reads ANSSPGRGQPLNTQETARLPLRSNGPAPSQQALER. The interval 780–1003 is NAD-binding domain; the sequence is LTGASGFLGI…ACVELGFYNG (224 aa). The segment at 1100–1465 is aminotransferase domain; it reads NAAGTVVHRE…YNTVAEVQEF (366 aa).

The protein belongs to the NRP synthetase family.

Its pathway is secondary metabolite biosynthesis. Functionally, nonribosomal peptide synthetase-like enzyme; part of the gene cluster that mediates the biosynthesis of the isoquinoline alkaloids fumisoquin A, fumisoquin B and fumisoquin C; as well as small amounts of fumipyrrole as a shunt metabolite. The products of the cluster lead to a brown coloration and are important for growth and conidiation. The nonribosomal peptide synthetase-like protein fsqF, which lacks a canonical condensation domain, is required for addition of a serine-derived dehydroalanine moiety to activated tyrosine but is not essential for the subsequent steps leading to isoquinoline formation. A different enzyme, most likely the ATP-grasp enzyme fsqD, is responsible for activation of tyrosine. Three additional enzymes encoded by the fsq cluster, the N-methyltransferase fsqC, the phenol 2-monooxygenase fsqG and the FAD-dependent oxidase fsqB, catalyze the formation of the isoquinoline ring system in the fumisoquins. FsqB converts the fspF thiolation domain-bound (2S,4S,5S)-2-amino-6-(3,4-dihydroxyphenyl)-4-hydroxy-5-(methylamino)hexanoyl into isoquinoline. The cyclization most likely proceeds via a two-step mechanism, beginning with FAD-dependent oxidation of the methyl group to an iminium species followed by electrophilic attack on the deprotonated phenol. The sequence is that of Nonribosomal peptide synthetase-like enzyme fsqF from Aspergillus fumigatus (strain ATCC MYA-4609 / CBS 101355 / FGSC A1100 / Af293) (Neosartorya fumigata).